We begin with the raw amino-acid sequence, 747 residues long: MLTLTRCHHLKQIAQECLSSLLVKVQSRTQLLLPRASARAESGKSWHSTHSLVGDKNIVLMGPPGSGKTTVGRILGDKLGCCVIDVDSDVLEKAWNMSASEKLQDVGNERFLEEEGKTVLNLSASGSVISLSGSNPMHDASMWHLKKNGIVVYLDVPLTDIISRLKSMRIDRIVGQNTGASLRDSLKHVRLYYKKWYDARVFCESGASAEEVADKVLDVVKRYQDVDSETFISTRHVCLKDHDKKFPPKYFSEAVVEGLASDGGLFVPEKEFPKLSPGEWNNLIGATYIERAQVLLERCIHPADIPAAKLGEMIETAYGENFACSKVAPVRHLSGNQFILELFYGPTGSFKDLSLQLMPHIFAYCIPPGCNYVILVATSGDTGSAVLNGFSHLNKNDKERIAVVTFFPENGVSDFQKAEIIGSQRENGWAIGVRSDFDFCQTAIRKIFNDSDFTGFLAVEYGTILSSANSINWARLLPQIVYHASAYLELVNQRFISFGSPVDVCVPTGNFGNVLAAVYAKMMGIPIRKFICASNQNHVLTDFIKTGHYDLRNRKLAQTFSPSIDILKSSNLERHLYLMANKDGQLMANLYHQLESQLHFRIEKMLVEKLQQEFVADWCSEGECLAAISTTYNASGYILDPHTAVAKVVADKMQDKSCPVLIASTAHYSKFAPAIMQALGIKELNQTSSSQLYLLSSYNALPPPHEALLERMKQKEKMDYQVCVADVDVLKSHAEKLIQNWFVRKSE.

Lys351 is subject to N6-(pyridoxal phosphate)lysine.

It belongs to the threonine synthase family. Requires pyridoxal 5'-phosphate as cofactor.

This is Threonine synthase-like 1 (Thnsl1) from Mus musculus (Mouse).